The sequence spans 68 residues: uncharacterized protein (68 aa).

The next 2 membrane-spanning stretches (helical) occupy residues 1–21 and 28–48; these read MLFI…YFLP and VHFS…LSSV.

It is found in the cell membrane. This is an uncharacterized protein from Haemophilus influenzae (strain ATCC 51907 / DSM 11121 / KW20 / Rd).